Consider the following 532-residue polypeptide: Apoptosis-inducing factor 1, mitochondrial (532 aa).

The transit peptide at 1–26 directs the protein to the mitochondrion; it reads MIRNLTKLTKFTIGNRFYQSSSKGRF. The segment at 63–84 is disordered; it reads STPSIDVKEKKSQPPKTKEDYQ. The segment at 98-440 is FAD-dependent oxidoreductase; it reads YVIIGGGTAA…APYTYQPFFW (343 aa). FAD is bound by residues 102-106, 128-129, Arg136, and Lys141; these read GGGTA and KE. Position 160 (Trp160) interacts with NAD(+). Val188 and Arg236 together coordinate FAD. NAD(+) contacts are provided by residues 260-263, Glu288, and Gly353; that span reads GGFL. Asp392 is an FAD binding site. The short motif at 400 to 406 is the Nuclear localization signal element; sequence SLGVRRR. Residues 408-409, Trp440, and Glu450 each bind NAD(+); that span reads EH. FAD is bound by residues 409–410 and Trp440; that span reads HH.

It belongs to the FAD-dependent oxidoreductase family. The cofactor is FAD.

The protein resides in the mitochondrion. Its subcellular location is the cytoplasm. The protein localises to the nucleus. The enzyme catalyses A + NADH + H(+) = AH2 + NAD(+). In terms of biological role, probable NADH oxidoreductase that acts as a caspase-independent mitochondrial effector of apoptotic cell death. The chain is Apoptosis-inducing factor 1, mitochondrial (aif) from Dictyostelium discoideum (Social amoeba).